The sequence spans 383 residues: uncharacterized protein (383 aa).

This sequence belongs to the peptidase M20 family.

This is an uncharacterized protein from Staphylococcus aureus (strain bovine RF122 / ET3-1).